The primary structure comprises 371 residues: O-phospho-L-seryl-tRNA:Cys-tRNA synthase 1 (371 aa).

Pyridoxal 5'-phosphate-binding positions include 78 to 79, N183, and 206 to 208; these read AR and SGH. K209 carries the N6-(pyridoxal phosphate)lysine modification.

The protein belongs to the SepCysS family. As to quaternary structure, homodimer. Probably interacts with SepRS. It depends on pyridoxal 5'-phosphate as a cofactor.

It catalyses the reaction O-phospho-L-seryl-tRNA(Cys) + hydrogen sulfide + H(+) = L-cysteinyl-tRNA(Cys) + phosphate. Its function is as follows. Converts O-phospho-L-seryl-tRNA(Cys) (Sep-tRNA(Cys)) to L-cysteinyl-tRNA(Cys) (Cys-tRNA(Cys)). This is O-phospho-L-seryl-tRNA:Cys-tRNA synthase 1 from Archaeoglobus fulgidus (strain ATCC 49558 / DSM 4304 / JCM 9628 / NBRC 100126 / VC-16).